A 158-amino-acid chain; its full sequence is Putative metalloproteinase inhibitor tag-225 (158 aa).

Residues 1–20 (MQNLSLSLVILSVLIAVTLA) form the signal peptide. Zn(2+) is bound at residue cysteine 21. Residues 21–25 (CKCRE) are involved in metalloproteinase-binding. Intrachain disulfides connect cysteine 21/cysteine 96, cysteine 23/cysteine 123, and cysteine 33/cysteine 158. In terms of domain architecture, NTR spans 21 to 158 (CKCREQSTKE…LQSQVKSIKC (138 aa)). N-linked (GlcNAc...) asparagine glycosylation occurs at asparagine 79. Positions 93-94 (AP) are involved in metalloproteinase-binding.

It belongs to the protease inhibitor I35 (TIMP) family.

The protein resides in the secreted. Complexes with metalloproteinases and irreversibly inactivates them by binding to their catalytic zinc cofactor. This Caenorhabditis elegans protein is Putative metalloproteinase inhibitor tag-225 (tag-225).